Consider the following 656-residue polypeptide: Bifunctional protein ThiO/ThiG (656 aa).

The thiO stretch occupies residues 1 to 395 (MQTTSDVLII…HAAENSEGSK (395 aa)). Residues 7-21 (VLII…AIAV) and 48-50 (AGM) each bind FAD. Position 56 (E56) interacts with glycine. V169 lines the FAD pocket. The glycine site is built by R298 and R324. 322 to 328 (HYRNGIL) serves as a coordination point for FAD. The segment at 396–656 (DLLEIAGRKF…ASSPLTGLVG (261 aa)) is thiG. K498 acts as the Schiff-base intermediate with DXP in catalysis. 1-deoxy-D-xylulose 5-phosphate-binding positions include G559, 585–586 (AG), and 607–608 (NS).

In the N-terminal section; belongs to the DAO family. ThiO subfamily. It in the C-terminal section; belongs to the ThiG family. Interacts with ThiH and ThiS. FAD serves as cofactor.

It localises to the cytoplasm. It catalyses the reaction glycine + O2 + H2O = glyoxylate + H2O2 + NH4(+). It carries out the reaction [ThiS sulfur-carrier protein]-C-terminal-Gly-aminoethanethioate + 2-iminoacetate + 1-deoxy-D-xylulose 5-phosphate = [ThiS sulfur-carrier protein]-C-terminal Gly-Gly + 2-[(2R,5Z)-2-carboxy-4-methylthiazol-5(2H)-ylidene]ethyl phosphate + 2 H2O + H(+). It functions in the pathway cofactor biosynthesis; thiamine diphosphate biosynthesis. Functionally, catalyzes the FAD-dependent oxidative deamination of glycine. Is essential for thiamine biosynthesis since the oxidation of glycine catalyzed by ThiO generates the glycine imine intermediate (dehydroglycine) required for the biosynthesis of the thiazole ring of thiamine pyrophosphate. In terms of biological role, catalyzes the rearrangement of 1-deoxy-D-xylulose 5-phosphate (DXP) to produce the thiazole phosphate moiety of thiamine. Sulfur is provided by the thiocarboxylate moiety of the carrier protein ThiS. In vitro, sulfur can be provided by H(2)S. In Synechocystis sp. (strain ATCC 27184 / PCC 6803 / Kazusa), this protein is Bifunctional protein ThiO/ThiG (thiO/thiG).